The chain runs to 915 residues: MAKPETENPYSKTVLLPETSFPMKADLAKREPGQIKVWKDQKVFLNMKEIRKSKPSFVLHDGPPYANGNFHVGHSLNKILKDIIIKSKTLSGYQTDMIPGWDCHGLPIEVQVLKNLGKEARNTGPSELRKKCREYAAEFVGKQGEDLNRFLCFWDENNKYLTMAPEFEARIVEVFGSLFAKGYIYKGKKPVYWCIDLATAHAEAEIEYQNHVSPSIYVKFAVKGETDTHCLIWTTTPWTLPANLAICFNEELPYSLFQSDAHGRLILADGLKEAVEQKTGITLTKIKSLSNADLKQMVFLHPFLDRESIPLFGNHVTLDAGTGCVHTAPGHGTDDYRVGTAAGLPTLSPVDDYGRYTDEFEMMKGIKIWDANPKIVELLREKNALVHFSEFTHSYPHSWRSKKPLIFRATPQWFFSIDHNGLRDESLKAIDKVQWIPDWGITRIRSMVESRPDWCLSRQRNWGVPIPSFTCKSCGLTHLDDKTIQHFIQIVKKEGIEVWYEKEAKDLLPADTKCSNCGSEDLKQDKDILDVWFDSGVSSFAVFGDSIGKEPADLYLEGSDQHRGWFQSSLWPSMAIRKTPPYKSVLTHGYVLDEKGHAMSKSLGNVINPTTDIINQYGADILRLWVSTQDFRDDVKIGKDSIKTVSEAYRKIRNTFRYLLGNTSAETLTWNLKKEELDTIDKYYLHKLAKLNDEVKKLYDTYQFHQVYHKILGFCTVDLSQDYFEIIRDRMYCDAKESKTRRSSEYTLAVILEVLSKLLAPILSFTTEEVWTSFGKKDSVFYSDFSDLTEWLDESLESKMKPVFETKEDVQKALEEARKLGKLGKSLEAEVVIDGKKDSLPFSSEELALFFVVSHVHFETNGIQEVFSEWKGESGSIQIRKPKHFECPRCWRHVSETEGKLCKRCDEVVSKLSPN.

Positions 64-74 match the 'HIGH' region motif; sequence PYANGNFHVGH. Residue Glu557 coordinates L-isoleucyl-5'-AMP. Residues 598 to 602 carry the 'KMSKS' region motif; it reads AMSKS. Lys601 serves as a coordination point for ATP. The Zn(2+) site is built by Cys887, Cys890, Cys902, and Cys905.

The protein belongs to the class-I aminoacyl-tRNA synthetase family. IleS type 1 subfamily. Monomer. Requires Zn(2+) as cofactor.

It localises to the cytoplasm. It carries out the reaction tRNA(Ile) + L-isoleucine + ATP = L-isoleucyl-tRNA(Ile) + AMP + diphosphate. Functionally, catalyzes the attachment of isoleucine to tRNA(Ile). As IleRS can inadvertently accommodate and process structurally similar amino acids such as valine, to avoid such errors it has two additional distinct tRNA(Ile)-dependent editing activities. One activity is designated as 'pretransfer' editing and involves the hydrolysis of activated Val-AMP. The other activity is designated 'posttransfer' editing and involves deacylation of mischarged Val-tRNA(Ile). The chain is Isoleucine--tRNA ligase from Leptospira biflexa serovar Patoc (strain Patoc 1 / ATCC 23582 / Paris).